Consider the following 127-residue polypeptide: RxLR effector protein SFI3 (127 aa).

The signal sequence occupies residues 1–20; sequence MRFLLVAVVAMMALVSSSTA. The RxLR-dEER signature appears at 40–62; that stretch reads RSLRNTEERSIAAILAEAGEEDR. The WY-domain stretch occupies residues 72–107; sequence WYKAKLTPTQVKTVLGVSQAEMNNVAKQLQRLYLGY.

The protein belongs to the RxLR effector family. As to quaternary structure, forms an unusual trans-homodimer. Interacts with host UBK.

The protein localises to the secreted. Its subcellular location is the host nucleus. It localises to the host nucleolus. Effector that suppresses flg22-induced post-translational MAP kinase activation in potato and tomato, but not in Arabidopsis. The perception of highly conserved pathogen- or microbe-associated molecular patterns (PAMPs/MAMPs), such as flg22, triggers converging signaling pathways recruiting MAP kinase cascades and inducing transcriptional re-programming, yielding a generic antimicrobial response. Does not suppress programmed cell death triggered by the P.infestans elicitin infestin-1 (INF1), or by co-expression of tomato Cf4 with Cladosporium fulvum Avr4. Suppresses early pattern-triggered immunity (PTI) via interaction with the U-box-kinase protein UBK, a positive regulator of specific PTI pathways in both potato and Nicotiana benthamiana. This chain is RxLR effector protein SFI3, found in Phytophthora infestans (strain T30-4) (Potato late blight agent).